A 1609-amino-acid chain; its full sequence is Probable outer membrane protein pmp21 (1609 aa).

A signal peptide spans 1 to 30 (MVAKKTVRSYRSSFSHSVIVAILSAGIAFE). The span at 132-145 (FSQPTQEPDTSNAV) shows a compositional bias: polar residues. 2 disordered regions span residues 132–183 (FSQP…KSPE) and 640–677 (TAPV…EVPP). Composition is skewed to basic and acidic residues over residues 149–175 (ISSD…KEVS) and 651–672 (NKDE…KTVE). Residues 1328–1609 (ELDFSTNVWG…DFNGGIRIIF (282 aa)) enclose the Autotransporter domain.

The protein belongs to the PMP outer membrane protein family.

It is found in the secreted. The protein resides in the cell wall. It localises to the cell outer membrane. This chain is Probable outer membrane protein pmp21 (pmp21), found in Chlamydia pneumoniae (Chlamydophila pneumoniae).